The chain runs to 370 residues: MQQDKVNLLGLNQKAIEDFFISIGEKKFHARQVFKWIHKKGVIDFDAMTDLGKNLRHKLKEKAQITIPKVVFSKASKDGTHKWLIDVGGSAVETVFIPEEGRGTLCVSSQVGCTLNCSFCSTGKQGFNRNLSAAEVIAQLWIAARTLSKTDGEHDFTVTNIVMMGMGEPLMNFENVVPAMDIMMDDLAYGLSRRKVTLSTSGVVPRIYDLLEQSGVSLAVSLHAPNDMLRNEIVPINKKYNIDELLEACKLYAQKGPHKHITFEYTLMEEVNDNLSDAEELVALLKSREVPAKINLIPFNPYPGTPYKKPSNNRIHRFKEFLQHNGFVTTVRKTRGDDIDAACGQLAGDVMDKTNRKQRYLKKLGDTNAN.

Residue Glu-93 is the Proton acceptor of the active site. Positions 99–337 constitute a Radical SAM core domain; sequence EEGRGTLCVS…VTTVRKTRGD (239 aa). A disulfide bridge connects residues Cys-106 and Cys-343. [4Fe-4S] cluster-binding residues include Cys-113, Cys-117, and Cys-120. S-adenosyl-L-methionine-binding positions include 167–168, Ser-199, 221–223, and Asn-300; these read GE and SLH. Cys-343 serves as the catalytic S-methylcysteine intermediate.

It belongs to the radical SAM superfamily. RlmN family. [4Fe-4S] cluster is required as a cofactor.

The protein resides in the cytoplasm. The enzyme catalyses adenosine(2503) in 23S rRNA + 2 reduced [2Fe-2S]-[ferredoxin] + 2 S-adenosyl-L-methionine = 2-methyladenosine(2503) in 23S rRNA + 5'-deoxyadenosine + L-methionine + 2 oxidized [2Fe-2S]-[ferredoxin] + S-adenosyl-L-homocysteine. The catalysed reaction is adenosine(37) in tRNA + 2 reduced [2Fe-2S]-[ferredoxin] + 2 S-adenosyl-L-methionine = 2-methyladenosine(37) in tRNA + 5'-deoxyadenosine + L-methionine + 2 oxidized [2Fe-2S]-[ferredoxin] + S-adenosyl-L-homocysteine. In terms of biological role, specifically methylates position 2 of adenine 2503 in 23S rRNA and position 2 of adenine 37 in tRNAs. m2A2503 modification seems to play a crucial role in the proofreading step occurring at the peptidyl transferase center and thus would serve to optimize ribosomal fidelity. This chain is Dual-specificity RNA methyltransferase RlmN, found in Francisella tularensis subsp. novicida (strain U112).